A 347-amino-acid chain; its full sequence is Ion-translocating oxidoreductase complex subunit D (347 aa).

Helical transmembrane passes span 15-35, 36-56, 84-104, and 114-134; these read IMFL…YFFG, IGTL…EIII, IPPL…IVVA, and NIFN…PVYM. Position 182 is an FMN phosphoryl threonine (Thr-182). Transmembrane regions (helical) follow at residues 217–237, 239–259, 261–281, 289–309, and 315–335; these read CINI…IICW, IPIS…FYSK, LFMS…AFFI, ACNN…VWII, and YPDA…LVDY.

It belongs to the NqrB/RnfD family. As to quaternary structure, the complex is composed of six subunits: RnfA, RnfB, RnfC, RnfD, RnfE and RnfG. It depends on FMN as a cofactor.

The protein localises to the cell inner membrane. Functionally, part of a membrane-bound complex that couples electron transfer with translocation of ions across the membrane. The protein is Ion-translocating oxidoreductase complex subunit D of Buchnera aphidicola subsp. Acyrthosiphon pisum (strain 5A).